Consider the following 540-residue polypeptide: Probable quinate permease (540 aa).

Residues 1–22 (MSILALVEDRPTPKEVYNWRIY) lie on the Cytoplasmic side of the membrane. The helical transmembrane segment at 23 to 43 (LLAAVASFTSCMIGYDSAFIG) threads the bilayer. The Extracellular portion of the chain corresponds to 44 to 74 (TTLALGSFREEFEFTTMEPAAVNRVSANIVS). The chain crosses the membrane as a helical span at residues 75–95 (CYQAGAFFGAFFAYPIGHFWG). Residues 96-97 (RK) are Cytoplasmic-facing. A helical transmembrane segment spans residues 98-118 (WGLLSAAAIFTLGAGLMLGAN). The Extracellular segment spans residues 119 to 130 (GDRGLGLIYGGR). The helical transmembrane segment at 131–151 (VLAGIGVGAGSNITPIYISEL) threads the bilayer. Residues 152 to 157 (APPSIR) lie on the Cytoplasmic side of the membrane. The helical transmembrane segment at 158 to 178 (GHLVGVYELGWQIGGLVGFWI) threads the bilayer. The Extracellular portion of the chain corresponds to 179–193 (NYGVSETLAPSHKQW). Residues 194-214 (IIPFAVQLIPSGLLLIGAVFL) traverse the membrane as a helical segment. Residues 215-285 (RESPRWLFSS…AGTNKKVMYR (71 aa)) are Cytoplasmic-facing. Residues 286 to 306 (LFLGSMLFFWQNGSGINAINY) form a helical membrane-spanning segment. The Extracellular portion of the chain corresponds to 307 to 325 (YSPTVFKSIGLRGTNTGMF). A helical membrane pass occupies residues 326–346 (STGIFGVVKTVVTFIWLLYLI). Residues 347-352 (DRMGRR) lie on the Cytoplasmic side of the membrane. Residues 353–373 (LLLLVGAAGASVCLWIVGAYI) traverse the membrane as a helical segment. Over 374–387 (KIANPAKNGNGEMT) the chain is Extracellular. Residues 388–408 (GGGIAAMFFFYLYTVFYTPSW) traverse the membrane as a helical segment. The Cytoplasmic segment spans residues 409 to 456 (NGTPWVMNSEMFEPNMRSLAQACAAASNWLWNFLISRFTPQMFDKMGY). Residues 457–477 (GVWFFFASLMLCSIVIVFFLI) traverse the membrane as a helical segment. At 478–540 (PETKGIPLES…RLESVQPKEA (63 aa)) the chain is on the extracellular side. Positions 519 to 540 (IEESGYTKSGEQRLESVQPKEA) are disordered. Over residues 528 to 540 (GEQRLESVQPKEA) the composition is skewed to basic and acidic residues.

The protein belongs to the major facilitator superfamily. Sugar transporter (TC 2.A.1.1) family. In terms of assembly, interacts with creB. Post-translationally, ubiquitinated. Deubiquitinated by creB, probably to control its activity or amount.

The protein localises to the cell membrane. Its function is as follows. Integral membrane transporter that imports quinic acid to be catabolized as a carbon source. This chain is Probable quinate permease (qutD), found in Aspergillus clavatus (strain ATCC 1007 / CBS 513.65 / DSM 816 / NCTC 3887 / NRRL 1 / QM 1276 / 107).